A 699-amino-acid chain; its full sequence is SPS-sensor serine protease component SSY5 (699 aa).

2 disordered regions span residues 1 to 113 and 129 to 158; these read MVRF…LQGF and VKEE…GNAR. A propeptide spanning residues 1 to 381 is cleaved from the precursor; the sequence is MVRFFGLNKK…YCVKDYIKKA (381 aa). Residues 24–38 are compositionally biased toward polar residues; that stretch reads NEQNAAETSSSNVSG. Positions 39 to 51 are enriched in basic and acidic residues; the sequence is NEERIDPNSHDAN. Over residues 52 to 78 the composition is skewed to low complexity; sequence PENANNDDASTTFGSSIQSSSIFSRGR. A compositionally biased stretch (polar residues) spans 83–93; the sequence is TGASSSMATSE. Composition is skewed to low complexity over residues 97–109 and 144–154; these read HSSG…NSKN and SSSTSSTLATS. Positions 459-699 are serine protease; that stretch reads FAITCAHVVL…QWDIDPQLDG (241 aa). Active-site charge relay system residues include His-465, Asp-545, and Ser-640.

It belongs to the peptidase S64 family. In terms of assembly, component of the plasma membrane SPS (SSY1-PTR3-SSY5) amino acid sensor complex. Post-translationally, the propeptide is autoproteolytically cleaved from the catalytic domain but remains associated, forming an inactive protease complex. This processing occurs even in the absence of signaling.

The protein localises to the cell membrane. In terms of biological role, protease component of the SPS-sensor system, which regulates the expression of several amino acid-metabolizing enzymes and amino acid- and peptide-permeases in response to extracellular amino acid levels by controlling the activity of two transcription factors, STP1 and STP2. Catalyzes the activation of these transcription factors, which are synthesized as latent cytoplasmic precursors, by proteolytic removal of an N-terminal inhibitory domain containing cytoplasmic retention motifs. SSY5 binds as an inactive protease complex to STP1. In response to extracellular amino acids and dependent on the other SPS-sensor components, the inhibitory propeptide is induced to dissociate, and thereby enables the catalytic domain to process STP1. In Saccharomyces cerevisiae (strain YJM789) (Baker's yeast), this protein is SPS-sensor serine protease component SSY5 (SSY5).